The sequence spans 492 residues: Glycylpeptide N-tetradecanoyltransferase 2 (492 aa).

The segment at 1-77 is disordered; that stretch reads MAEDSESAAS…SASDSQEIKN (77 aa). The span at 15–32 shows a compositional bias: acidic residues; the sequence is ELDDQDTCGIDGDNEEEN. Basic residues predominate over residues 46-57; that stretch reads KKKKKKQKRKKE. A compositionally biased stretch (polar residues) spans 61 to 72; the sequence is SGGTKSDSASDS. Residues His-111, Trp-116, Leu-244, Val-246, Ser-252, Arg-254, Val-255, and Ala-256 each coordinate tetradecanoyl-CoA.

It belongs to the NMT family.

The protein resides in the cytoplasm. It localises to the membrane. It catalyses the reaction N-terminal glycyl-[protein] + tetradecanoyl-CoA = N-tetradecanoylglycyl-[protein] + CoA + H(+). The catalysed reaction is N-terminal glycyl-L-lysyl-[protein] + tetradecanoyl-CoA = N-terminal glycyl-(N(6)-tetradecanoyl)-L-lysyl-[protein] + CoA + H(+). In terms of biological role, adds a myristoyl group to the N-terminal glycine residue of certain cellular and viral proteins. Also able to mediate N-terminal lysine myristoylation of proteins. The chain is Glycylpeptide N-tetradecanoyltransferase 2 from Danio rerio (Zebrafish).